The following is a 544-amino-acid chain: Chaperonin GroEL (544 aa).

ATP-binding positions include 30–33, lysine 51, 87–91, glycine 415, and aspartate 495; these read TLGP and DGTTT.

Belongs to the chaperonin (HSP60) family. Forms a cylinder of 14 subunits composed of two heptameric rings stacked back-to-back. Interacts with the co-chaperonin GroES.

It localises to the cytoplasm. The catalysed reaction is ATP + H2O + a folded polypeptide = ADP + phosphate + an unfolded polypeptide.. Together with its co-chaperonin GroES, plays an essential role in assisting protein folding. The GroEL-GroES system forms a nano-cage that allows encapsulation of the non-native substrate proteins and provides a physical environment optimized to promote and accelerate protein folding. The chain is Chaperonin GroEL from Agrobacterium fabrum (strain C58 / ATCC 33970) (Agrobacterium tumefaciens (strain C58)).